The chain runs to 235 residues: Thiopurine S-methyltransferase (235 aa).

Trp-13, Leu-48, Glu-69, and Arg-126 together coordinate S-adenosyl-L-methionine. Positions 199–235 (PDPQNGAPRRVEHKVYQLTGKRPASPEADGRAAETED) are disordered. The segment covering 226 to 235 (ADGRAAETED) has biased composition (basic and acidic residues).

This sequence belongs to the class I-like SAM-binding methyltransferase superfamily. TPMT family.

Its subcellular location is the cytoplasm. The catalysed reaction is S-adenosyl-L-methionine + a thiopurine = S-adenosyl-L-homocysteine + a thiopurine S-methylether.. In Stutzerimonas stutzeri (strain A1501) (Pseudomonas stutzeri), this protein is Thiopurine S-methyltransferase.